The following is a 276-amino-acid chain: Pantothenate synthetase (276 aa).

25–32 (MGYLHRGH) is an ATP binding site. Residue His32 is the Proton donor of the active site. Residue Gln56 participates in (R)-pantoate binding. Residue Gln56 coordinates beta-alanine. 143–146 (GEKD) is an ATP binding site. Position 149 (Gln149) interacts with (R)-pantoate. Residues Val172 and 180-183 (LSSR) each bind ATP.

The protein belongs to the pantothenate synthetase family. As to quaternary structure, homodimer.

The protein localises to the cytoplasm. It carries out the reaction (R)-pantoate + beta-alanine + ATP = (R)-pantothenate + AMP + diphosphate + H(+). The protein operates within cofactor biosynthesis; (R)-pantothenate biosynthesis; (R)-pantothenate from (R)-pantoate and beta-alanine: step 1/1. Functionally, catalyzes the condensation of pantoate with beta-alanine in an ATP-dependent reaction via a pantoyl-adenylate intermediate. This chain is Pantothenate synthetase, found in Thermus thermophilus (strain ATCC BAA-163 / DSM 7039 / HB27).